The following is a 439-amino-acid chain: Ectonucleotide pyrophosphatase/phosphodiesterase family member 7 (439 aa).

The first 21 residues, 1 to 21 (MGHSAVLLCVALAILPACVTG), serve as a signal peptide directing secretion. The Extracellular segment spans residues 22–414 (APVQRQHKLL…ILRPMLRSGS (393 aa)). Positions 36 and 72 each coordinate Zn(2+). The segment at 69–75 (VTMTSPC) is required for enzyme activity. Catalysis depends on T72, which acts as the Nucleophile. N93 is a binding site for substrate. N-linked (GlcNAc...) asparagine glycans are attached at residues N97, N118, N143, and N165. The Zn(2+) site is built by D196, H200, D243, and H244. N264 carries N-linked (GlcNAc...) asparagine glycosylation. H350 lines the Zn(2+) pocket. Residues 415 to 435 (ASLLSSQHHLVALLVGILTCL) form a helical membrane-spanning segment. Topologically, residues 436-439 (AKVL) are cytoplasmic.

Zn(2+) serves as cofactor. Post-translationally, N-glycosylated; required for activity and transport to the plasma membrane. As to expression, expressed in liver and small intestine.

It localises to the cell membrane. It carries out the reaction a sphingomyelin + H2O = phosphocholine + an N-acylsphing-4-enine + H(+). It catalyses the reaction a 1-O-alkyl-2-acetyl-sn-glycero-3-phosphocholine + H2O = a 1-O-alkyl-2-acetyl-sn-glycerol + phosphocholine + H(+). The catalysed reaction is 1-O-octadecyl-2-acetyl-sn-glycero-3-phosphocholine + H2O = 1-O-octadecyl-2-acetyl-sn-glycerol + phosphocholine + H(+). The enzyme catalyses 1-hexadecanoyl-sn-glycero-3-phosphocholine + H2O = 1-hexadecanoyl-sn-glycerol + phosphocholine + H(+). Its function is as follows. Choline-specific phosphodiesterase that hydrolyzes sphingomyelin releasing the ceramide and phosphocholine and therefore is involved in sphingomyelin digestion, ceramide formation, and fatty acid (FA) absorption in the gastrointestinal tract. Also has phospholipase C activity and can also cleave phosphocholine from palmitoyl lyso-phosphatidylcholine and platelet-activating factor (PAF) leading to its inactivation. Does not have nucleotide pyrophosphatase activity. May promote cholesterol absorption by affecting the levels of sphingomyelin derived from either diet or endogenous sources, in the intestinal lumen. In Mus musculus (Mouse), this protein is Ectonucleotide pyrophosphatase/phosphodiesterase family member 7.